The sequence spans 507 residues: Maturase K (507 aa).

This sequence belongs to the intron maturase 2 family. MatK subfamily.

It is found in the plastid. The protein resides in the chloroplast. Usually encoded in the trnK tRNA gene intron. Probably assists in splicing its own and other chloroplast group II introns. This is Maturase K from Lyonia ligustrina (Maleberry).